Consider the following 743-residue polypeptide: Isocitrate dehydrogenase [NADP] 2 (743 aa).

Positions 87 and 89 each coordinate NADP(+). Residues Ser-134, Asn-137, Arg-141, Arg-147, and Lys-257 each contribute to the D-threo-isocitrate site. Asn-137 is an NADP(+) binding site. Position 352 (Asp-352) interacts with Mg(2+). D-threo-isocitrate is bound by residues Tyr-422 and Arg-549. Residues Asp-550 and Asp-554 each coordinate Mg(2+). NADP(+) is bound by residues Ser-587, His-591, Arg-602, Asp-604, and Arg-651.

This sequence belongs to the monomeric-type IDH family. Monomer. Requires Mg(2+) as cofactor. The cofactor is Mn(2+).

It carries out the reaction D-threo-isocitrate + NADP(+) = 2-oxoglutarate + CO2 + NADPH. Its function is as follows. Catalyzes the oxidative decarboxylation of isocitrate to 2-oxoglutarate and carbon dioxide with the concomitant reduction of NADP(+). In Colwellia maris, this protein is Isocitrate dehydrogenase [NADP] 2 (icd2).